The following is a 495-amino-acid chain: Type-1 histone deacetylase 1 (495 aa).

Asp94 serves as a coordination point for substrate. Residue His136 is the Proton acceptor of the active site. Substrate is bound at residue Gly144. A divalent metal cation-binding residues include Asp171, His173, and Asp259. Tyr298 contributes to the substrate binding site. A disordered region spans residues 372 to 495 (PAAAHHDIPP…EDADVDMDSG (124 aa)). Basic and acidic residues predominate over residues 396 to 413 (DVRISEADRDKKVHHQGE). Polar residues predominate over residues 425–443 (NYSNGLEATSTSRRNQVSI). The segment covering 454–480 (NSRNNNNNNNNNNNNNNNNNNNSNNNN) has biased composition (low complexity).

Belongs to the histone deacetylase family. HD type 1 subfamily.

The protein resides in the nucleus. Its subcellular location is the cytoplasm. It carries out the reaction N(6)-acetyl-L-lysyl-[histone] + H2O = L-lysyl-[histone] + acetate. In terms of biological role, responsible for the deacetylation of lysine residues on the N-terminal part of the core histones (H2A, H2B, H3 and H4). Histone deacetylation plays an important role in transcriptional regulation, cell cycle progression and developmental events. Histone deacetylases act via the formation of large multiprotein complexes. In Dictyostelium discoideum (Social amoeba), this protein is Type-1 histone deacetylase 1 (hdaA).